The chain runs to 509 residues: ATP synthase subunit alpha (509 aa).

171–178 (GDRKTGKT) is an ATP binding site.

This sequence belongs to the ATPase alpha/beta chains family. As to quaternary structure, F-type ATPases have 2 components, CF(1) - the catalytic core - and CF(0) - the membrane proton channel. CF(1) has five subunits: alpha(3), beta(3), gamma(1), delta(1), epsilon(1). CF(0) has three main subunits: a(1), b(2) and c(9-12). The alpha and beta chains form an alternating ring which encloses part of the gamma chain. CF(1) is attached to CF(0) by a central stalk formed by the gamma and epsilon chains, while a peripheral stalk is formed by the delta and b chains.

The protein localises to the cell inner membrane. The enzyme catalyses ATP + H2O + 4 H(+)(in) = ADP + phosphate + 5 H(+)(out). Its function is as follows. Produces ATP from ADP in the presence of a proton gradient across the membrane. The alpha chain is a regulatory subunit. This Ehrlichia canis (strain Jake) protein is ATP synthase subunit alpha.